The sequence spans 316 residues: 4-hydroxy-3-methylbut-2-enyl diphosphate reductase (316 aa).

[4Fe-4S] cluster is bound at residue Cys-12. Positions 41 and 74 each coordinate (2E)-4-hydroxy-3-methylbut-2-enyl diphosphate. The dimethylallyl diphosphate site is built by His-41 and His-74. Isopentenyl diphosphate is bound by residues His-41 and His-74. Cys-96 serves as a coordination point for [4Fe-4S] cluster. A (2E)-4-hydroxy-3-methylbut-2-enyl diphosphate-binding site is contributed by His-124. His-124 provides a ligand contact to dimethylallyl diphosphate. Residue His-124 participates in isopentenyl diphosphate binding. Glu-126 serves as the catalytic Proton donor. Thr-167 is a (2E)-4-hydroxy-3-methylbut-2-enyl diphosphate binding site. Cys-197 lines the [4Fe-4S] cluster pocket. Residues Ser-225, Ser-226, Asn-227, and Ser-269 each coordinate (2E)-4-hydroxy-3-methylbut-2-enyl diphosphate. Residues Ser-225, Ser-226, Asn-227, and Ser-269 each coordinate dimethylallyl diphosphate. Positions 225, 226, 227, and 269 each coordinate isopentenyl diphosphate.

The protein belongs to the IspH family. As to quaternary structure, homodimer. [4Fe-4S] cluster serves as cofactor.

It carries out the reaction isopentenyl diphosphate + 2 oxidized [2Fe-2S]-[ferredoxin] + H2O = (2E)-4-hydroxy-3-methylbut-2-enyl diphosphate + 2 reduced [2Fe-2S]-[ferredoxin] + 2 H(+). The enzyme catalyses dimethylallyl diphosphate + 2 oxidized [2Fe-2S]-[ferredoxin] + H2O = (2E)-4-hydroxy-3-methylbut-2-enyl diphosphate + 2 reduced [2Fe-2S]-[ferredoxin] + 2 H(+). The protein operates within isoprenoid biosynthesis; dimethylallyl diphosphate biosynthesis; dimethylallyl diphosphate from (2E)-4-hydroxy-3-methylbutenyl diphosphate: step 1/1. It participates in isoprenoid biosynthesis; isopentenyl diphosphate biosynthesis via DXP pathway; isopentenyl diphosphate from 1-deoxy-D-xylulose 5-phosphate: step 6/6. In terms of biological role, catalyzes the conversion of 1-hydroxy-2-methyl-2-(E)-butenyl 4-diphosphate (HMBPP) into a mixture of isopentenyl diphosphate (IPP) and dimethylallyl diphosphate (DMAPP). Acts in the terminal step of the DOXP/MEP pathway for isoprenoid precursor biosynthesis. This Salmonella paratyphi A (strain ATCC 9150 / SARB42) protein is 4-hydroxy-3-methylbut-2-enyl diphosphate reductase.